A 56-amino-acid polypeptide reads, in one-letter code: VFVALILAIAIGQSEAGWLKKIGKKIERVGQHTRDATIQGLGIAQQAANVAATARG.

Position 55 is an arginine amide (arginine 55).

Belongs to the cecropin family.

The protein localises to the secreted. Functionally, cecropins have lytic and antibacterial activity against several Gram-positive and Gram-negative bacteria. The sequence is that of Cecropin-A2 (CecA2) from Drosophila yakuba (Fruit fly).